Here is a 77-residue protein sequence, read N- to C-terminus: Sec-independent protein translocase protein TatA (77 aa).

Residues 2 to 22 (GFGGISIWQLLIILLIVVMLF) form a helical membrane-spanning segment. Basic and acidic residues-rich tracts occupy residues 46-59 (DNGE…EEPK) and 66-77 (QARKVEEPAKKD). A disordered region spans residues 46 to 77 (DNGEAEKPAVEEPKGQTIDAQARKVEEPAKKD).

Belongs to the TatA/E family. As to quaternary structure, the Tat system comprises two distinct complexes: a TatABC complex, containing multiple copies of TatA, TatB and TatC subunits, and a separate TatA complex, containing only TatA subunits. Substrates initially bind to the TatABC complex, which probably triggers association of the separate TatA complex to form the active translocon.

It is found in the cell inner membrane. Functionally, part of the twin-arginine translocation (Tat) system that transports large folded proteins containing a characteristic twin-arginine motif in their signal peptide across membranes. TatA could form the protein-conducting channel of the Tat system. The chain is Sec-independent protein translocase protein TatA from Ectopseudomonas mendocina (strain ymp) (Pseudomonas mendocina).